Here is a 527-residue protein sequence, read N- to C-terminus: Cytochrome P450 monooxyhenase eriA (527 aa).

Residues 17-37 traverse the membrane as a helical segment; it reads LGVVDLSLLGVGAVIAFAWLF. N-linked (GlcNAc...) asparagine glycans are attached at residues Asn-77, Asn-274, and Asn-297. A heme-binding site is contributed by Cys-453.

It belongs to the cytochrome P450 family. The cofactor is heme.

It is found in the membrane. The enzyme catalyses cyathadiol + reduced [NADPH--hemoprotein reductase] + O2 = cyathatriol + oxidized [NADPH--hemoprotein reductase] + H2O + H(+). It functions in the pathway secondary metabolite biosynthesis. In terms of biological role, cytochrome P450 monooxygenase; part of the gene cluster that mediates the biosynthesis of erinacines, cyathane-xylosides that show unique biological activities, including leishmanicidal activity, stimulating activity for nerve growth-factor synthesis, and agonistic activity toward the kappa opioid receptor. Within the pathway, eriA catalyzes C-11 hydroxylation in the presence of the short chain dehydrogenase/reductase (SDR) eriH, which leads to the production of cyathatriol. The first step of the erinacines biosynthesis pathway is catalyzed by the geranylgeranyl diphosphate (GGPP) synthase eriE via conversion of farnesyl pyrophosphate and isopentyl pyrophosphate into geranylgeranyl pyrophosphate (GGPP). GGPP is then substrate of the diterpene cyclase eriG for the production of cyatha-3,12-diene. The cytochrome P450 monooxygenase eriI then hydroxylates cyatha-3,12-diene at C-14 of the seven-membered ring to produce erinacol, which is further hydroxylated at C-15 by the cytochrome P450 monooxygenase eriC to yield cyathadiol. The cytochrome P450 monooxygenase eriA then catalyzes C-11 hydroxylation in the presence of the short chain dehydrogenase/reductase (SDR) eriH, which leads to the production of cyathatriol. The acetyltransferase eriL converts cyathatriol into 11-O-acetyl-cyathatriol. The SDR eriH catalyzes further oxidation of 11-O-acetyl-cyathatriol into 1-O-acetylcyathin A3. Finally, the glycosyl transferase eriJ tranfers xylose from UDP-xylose onto C-14 of 11-O-acetyl-cyathatriol to form eracine Q. EriJ is also able to convert 11-O-acetyl-cyathatriol to eracine Q2 by using UDP-D-glucose as cosubstrate, but at a lower rate. The sequence is that of Cytochrome P450 monooxyhenase eriA from Hericium erinaceus (Lion's mane mushroom).